The primary structure comprises 480 residues: Peptidase S41 family protein ustP (480 aa).

The interval 78–97 (CMPNKKSRPPDPRPSLAVGK) is disordered. The segment at 134 to 336 (DVAVLQLPTF…LKQQGVRSIV (203 aa)) is peptidase S41 domain.

It belongs to the peptidase S41A family.

Its pathway is mycotoxin biosynthesis. In terms of biological role, peptidase S41 family protein; part of the gene cluster that mediates the biosynthesis of the secondary metabolite ustiloxin B, an antimitotic tetrapeptide. First, ustA is processed by the subtilisin-like endoprotease Kex2 that is outside the ustiloxin B gene cluster, at the C-terminal side of Arg-Lys, after transfer to Golgi apparatus through the endoplasmic reticulum (ER). Cleavage by KEX2 generates 16 peptides YAIG-I to YAIG-XVI. To process the precursor peptide further, at least two peptidases are necessary to cleave the N-terminal and C-terminal sides of the Tyr-Ala-Ile-Gly core peptide which serves as backbone for the synthesis of ustiloxin B, through cyclization and modification of the tyrosine with a non-protein coding amino acid, norvaline. One of the two peptidases must be the serine peptidase ustP; and the other pepdidase is probably ustH. Macrocyclization of the core peptide derived from ustA requires the tyrosinase ustQ, as well as the homologous oxidases ustYa and ustYb, and leads to the production of the first cyclization product N-desmethylustiloxin F. For the formation of N-desmethylustiloxin F, three oxidation steps are required, hydroxylation at the benzylic position, hydroxylation at either the aromatic ring of Tyr or beta-position of Ile, and oxidative cyclization. UstQ may catalyze the oxidation of a phenol moiety, whereas the ustYa and ustYb are most likely responsible for the remaining two-step oxidations. N-desmethylustiloxin F is then methylated by ustM to yield ustiloxin F which in turn substrate of the cytochrome P450 monooxygenase ustC which catalyzes the formation of S-deoxyustiloxin H. The flavoprotein monooxygenases ustF1 and ustF2 then participate in the modification of the side chain of S-deoxyustiloxin H, leading to the synthesis of an oxime intermediate, via ustiloxin H. Finally, carboxylative dehydration performed by the cysteine desulfurase-like protein ustD yields ustiloxin B. This is Peptidase S41 family protein ustP from Aspergillus flavus (strain ATCC 200026 / FGSC A1120 / IAM 13836 / NRRL 3357 / JCM 12722 / SRRC 167).